Consider the following 242-residue polypeptide: ATP synthase subunit a, chloroplastic (242 aa).

Transmembrane regions (helical) follow at residues 34–54 (GQVL…AVLG), 93–113 (VPFI…GAII), 132–152 (INTT…AGLS), 188–210 (LFGN…PLVI), and 222–242 (GSVQ…EALE).

Belongs to the ATPase A chain family. As to quaternary structure, F-type ATPases have 2 components, CF(1) - the catalytic core - and CF(0) - the membrane proton channel. CF(1) has five subunits: alpha(3), beta(3), gamma(1), delta(1), epsilon(1). CF(0) has four main subunits: a, b, b' and c.

It localises to the plastid. It is found in the chloroplast thylakoid membrane. In terms of biological role, key component of the proton channel; it plays a direct role in the translocation of protons across the membrane. This is ATP synthase subunit a, chloroplastic from Trieres chinensis (Marine centric diatom).